The following is a 151-amino-acid chain: Urease accessory protein UreE (151 aa).

It belongs to the UreE family.

It localises to the cytoplasm. In terms of biological role, involved in urease metallocenter assembly. Binds nickel. Probably functions as a nickel donor during metallocenter assembly. The polypeptide is Urease accessory protein UreE (Bacillus cereus (strain ATCC 10987 / NRS 248)).